A 378-amino-acid polypeptide reads, in one-letter code: Transcription elongation factor TFIIS (378 aa).

At methionine 1 the chain carries N-acetylmethionine. The 80-residue stretch at 10–89 (EGAKKAADAA…EIWKKVVIEE (80 aa)) folds into the TFIIS N-terminal domain. Residues 210–333 (VRDKIRELLV…DCERGLAAKA (124 aa)) enclose the TFIIS central domain. Residues 336-376 (DQFKCGRCGQRKCTYYQMQTRSADEPMTTYVTCVNCDNHWK) form a TFIIS-type zinc finger. Residues cysteine 340, cysteine 343, cysteine 368, and cysteine 371 each contribute to the Zn(2+) site.

Expressed in roots, leaves and flowers.

It localises to the nucleus. Its function is as follows. Necessary for efficient RNA polymerase II transcription elongation past template-encoded arresting sites. Involved in the control of seed dormancy and germination. This Arabidopsis thaliana (Mouse-ear cress) protein is Transcription elongation factor TFIIS.